Consider the following 433-residue polypeptide: Enolase (433 aa).

A (2R)-2-phosphoglycerate-binding site is contributed by Q163. The Proton donor role is filled by E205. 3 residues coordinate Mg(2+): D242, E285, and D312. Positions 337, 366, 367, and 388 each coordinate (2R)-2-phosphoglycerate. K337 functions as the Proton acceptor in the catalytic mechanism.

This sequence belongs to the enolase family. Mg(2+) serves as cofactor.

Its subcellular location is the cytoplasm. It is found in the secreted. The protein resides in the cell surface. The catalysed reaction is (2R)-2-phosphoglycerate = phosphoenolpyruvate + H2O. The protein operates within carbohydrate degradation; glycolysis; pyruvate from D-glyceraldehyde 3-phosphate: step 4/5. Catalyzes the reversible conversion of 2-phosphoglycerate (2-PG) into phosphoenolpyruvate (PEP). It is essential for the degradation of carbohydrates via glycolysis. This Lawsonia intracellularis (strain PHE/MN1-00) protein is Enolase.